The sequence spans 342 residues: Holliday junction branch migration complex subunit RuvB (342 aa).

The interval 1–179 (MTNILSPEKS…FGIPMRLNFY (179 aa)) is large ATPase domain (RuvB-L). Residues Ile18, Arg19, Gly60, Lys63, Thr64, Thr65, 126–128 (EDF), Arg169, Tyr179, and Arg216 each bind ATP. A Mg(2+)-binding site is contributed by Thr64. The tract at residues 180–250 (NTEELKQVLN…ICDFGLKRLT (71 aa)) is small ATPAse domain (RuvB-S). The tract at residues 253-342 (SIGLDSNDYR…NQLNILNENE (90 aa)) is head domain (RuvB-H). DNA contacts are provided by Arg289, Arg308, and Arg313.

The protein belongs to the RuvB family. In terms of assembly, homohexamer. Forms an RuvA(8)-RuvB(12)-Holliday junction (HJ) complex. HJ DNA is sandwiched between 2 RuvA tetramers; dsDNA enters through RuvA and exits via RuvB. An RuvB hexamer assembles on each DNA strand where it exits the tetramer. Each RuvB hexamer is contacted by two RuvA subunits (via domain III) on 2 adjacent RuvB subunits; this complex drives branch migration. In the full resolvosome a probable DNA-RuvA(4)-RuvB(12)-RuvC(2) complex forms which resolves the HJ.

Its subcellular location is the cytoplasm. The enzyme catalyses ATP + H2O = ADP + phosphate + H(+). In terms of biological role, participates in UV-tolerance of Synechocystis PCC 6803. Its function is as follows. The RuvA-RuvB-RuvC complex processes Holliday junction (HJ) DNA during genetic recombination and DNA repair, while the RuvA-RuvB complex plays an important role in the rescue of blocked DNA replication forks via replication fork reversal (RFR). RuvA specifically binds to HJ cruciform DNA, conferring on it an open structure. The RuvB hexamer acts as an ATP-dependent pump, pulling dsDNA into and through the RuvAB complex. RuvB forms 2 homohexamers on either side of HJ DNA bound by 1 or 2 RuvA tetramers; 4 subunits per hexamer contact DNA at a time. Coordinated motions by a converter formed by DNA-disengaged RuvB subunits stimulates ATP hydrolysis and nucleotide exchange. Immobilization of the converter enables RuvB to convert the ATP-contained energy into a lever motion, pulling 2 nucleotides of DNA out of the RuvA tetramer per ATP hydrolyzed, thus driving DNA branch migration. The RuvB motors rotate together with the DNA substrate, which together with the progressing nucleotide cycle form the mechanistic basis for DNA recombination by continuous HJ branch migration. Branch migration allows RuvC to scan DNA until it finds its consensus sequence, where it cleaves and resolves cruciform DNA. This chain is Holliday junction branch migration complex subunit RuvB, found in Rickettsia prowazekii (strain Madrid E).